A 279-amino-acid chain; its full sequence is 4-diphosphocytidyl-2-C-methyl-D-erythritol kinase (279 aa).

The active site involves K9. 93–103 (PMGAGLGGGSS) contributes to the ATP binding site. Residue D135 is part of the active site.

It belongs to the GHMP kinase family. IspE subfamily.

It carries out the reaction 4-CDP-2-C-methyl-D-erythritol + ATP = 4-CDP-2-C-methyl-D-erythritol 2-phosphate + ADP + H(+). Its pathway is isoprenoid biosynthesis; isopentenyl diphosphate biosynthesis via DXP pathway; isopentenyl diphosphate from 1-deoxy-D-xylulose 5-phosphate: step 3/6. Catalyzes the phosphorylation of the position 2 hydroxy group of 4-diphosphocytidyl-2C-methyl-D-erythritol. This is 4-diphosphocytidyl-2-C-methyl-D-erythritol kinase from Acinetobacter baylyi (strain ATCC 33305 / BD413 / ADP1).